A 426-amino-acid polypeptide reads, in one-letter code: MTSNEELLQNYCSILFTYKTIGISNLHLYYFRETEIKSLRQLINAEFAILQTCNRVEIYLYSNTNTISEINKMIQYLNNVHNEPIGNQARVICGKDSIKHLFLVASGADSLSIGEYEILSQIRSTIDMFKKLGFSGKYLQILFERAIKVGRKVREETSISKGKVGIYSLAIDEAKRQFNNFYDRKIVIVGAGEMGQKIANMLYNEGVKNVTIMNRTVEKAKQLALKFGYNYEKLDLDKLGSFDIAFISISHENLRLENKWNTLIVDITVPPLFTGNNVITLEELEKISKLNFKAREEELVKINKLVEDGIDELIYDYKKEIYSEFMSKIMKRVETIRENEIVRAYKELEKLGINNQQVKEILDLMTRSIIKKSFQPLFDNVRSLVFDGENSINYINFLIDIFKDGNIPIFETKKIKKKQISKRSSS.

Residues 52–55 (TCNR), Ser-110, 115–117 (EYE), and Gln-121 contribute to the substrate site. Catalysis depends on Cys-53, which acts as the Nucleophile. 190 to 195 (GAGEMG) lines the NADP(+) pocket.

The protein belongs to the glutamyl-tRNA reductase family. As to quaternary structure, homodimer.

The catalysed reaction is (S)-4-amino-5-oxopentanoate + tRNA(Glu) + NADP(+) = L-glutamyl-tRNA(Glu) + NADPH + H(+). Its pathway is porphyrin-containing compound metabolism; protoporphyrin-IX biosynthesis; 5-aminolevulinate from L-glutamyl-tRNA(Glu): step 1/2. Functionally, catalyzes the NADPH-dependent reduction of glutamyl-tRNA(Glu) to glutamate 1-semialdehyde (GSA). In Saccharolobus islandicus (strain Y.N.15.51 / Yellowstone #2) (Sulfolobus islandicus), this protein is Glutamyl-tRNA reductase.